Reading from the N-terminus, the 353-residue chain is Cyanuric acid amidohydrolase (353 aa).

The RU A stretch occupies residues 1-90; sequence MSSTALYTVP…NIFVRDERQY (90 aa). Substrate is bound by residues Arg-49 and 69-70; that span reads SG. The segment at 96 to 231 is RU B; the sequence is GLVTAVGRTR…CHILVVAESD (136 aa). Lys-145 is a catalytic residue. Residues Arg-177 and 214–215 contribute to the substrate site; that span reads SS. Catalysis depends on Ser-214, which acts as the Nucleophile. Positions 237 to 353 are RU C; that stretch reads LRAAHTAMRD…TANATGEASR (117 aa). Glu-275 serves as a coordination point for Mg(2+). Residues Arg-302 and 321 to 322 each bind substrate; that span reads SG. Residues Ala-324, Gln-327, Gly-328, Pro-329, and Gly-332 each coordinate Mg(2+).

The protein belongs to the cyclic amide hydrolase (CyAH) family. Homotetramer.

It carries out the reaction cyanurate + H2O = 1-carboxybiuret + H(+). Its pathway is xenobiotic degradation; atrazine degradation; biuret from cyanurate: step 1/1. Inhibited by barbituric acid. In terms of biological role, responsible for the hydrolysis of cyanuric acid, an intermediate formed during catabolism of s-triazine based compounds in herbicides such as atrazine and polymers such as melamine. Catalyzes the hydrolytic opening of the s-triazine ring of cyanuric acid (2,4,6-trihydroxy-s-triazine) to yield carbon dioxide and carboxybiuret, which spontaneously decarboxylates to biuret. Required for growth on melamine or cyanuric acid as sole nitrogen source. This Rhodococcus sp protein is Cyanuric acid amidohydrolase.